Reading from the N-terminus, the 445-residue chain is Serine protease inhibitor A3F (445 aa).

4 N-linked (GlcNAc...) asparagine glycosylation sites follow: Asn28, Asn94, Asn174, and Asn259. The RCL stretch occupies residues 357–382 (GTEAAAGTGYQNLQCCQGVIYSMKIY).

It belongs to the serpin family.

In Mus musculus (Mouse), this protein is Serine protease inhibitor A3F (Serpina3f).